A 462-amino-acid polypeptide reads, in one-letter code: GTPase Der (462 aa).

EngA-type G domains follow at residues 9 to 171 and 201 to 372; these read KTIA…NLNQ and IQVG…ECFS. Residues 15–22, 62–66, 123–126, 207–214, 254–258, and 318–321 each bind GTP; these read GQPNVGKS, DTGGM, NKID, GRVNVGKS, DTAGI, and NKWD. The KH-like domain occupies 373–457; it reads KRIPTSLLNS…PLILNAKDKK (85 aa).

This sequence belongs to the TRAFAC class TrmE-Era-EngA-EngB-Septin-like GTPase superfamily. EngA (Der) GTPase family. Associates with the 50S ribosomal subunit.

Its function is as follows. GTPase that plays an essential role in the late steps of ribosome biogenesis. The polypeptide is GTPase Der (Helicobacter pylori (strain P12)).